Consider the following 231-residue polypeptide: 2-C-methyl-D-erythritol 4-phosphate cytidylyltransferase (231 aa).

The protein belongs to the IspD/TarI cytidylyltransferase family. IspD subfamily.

The enzyme catalyses 2-C-methyl-D-erythritol 4-phosphate + CTP + H(+) = 4-CDP-2-C-methyl-D-erythritol + diphosphate. The protein operates within isoprenoid biosynthesis; isopentenyl diphosphate biosynthesis via DXP pathway; isopentenyl diphosphate from 1-deoxy-D-xylulose 5-phosphate: step 2/6. Catalyzes the formation of 4-diphosphocytidyl-2-C-methyl-D-erythritol from CTP and 2-C-methyl-D-erythritol 4-phosphate (MEP). The chain is 2-C-methyl-D-erythritol 4-phosphate cytidylyltransferase from Bacillus licheniformis (strain ATCC 14580 / DSM 13 / JCM 2505 / CCUG 7422 / NBRC 12200 / NCIMB 9375 / NCTC 10341 / NRRL NRS-1264 / Gibson 46).